A 1483-amino-acid chain; its full sequence is Chromosome partition protein MukB (1483 aa).

34-41 contacts ATP; sequence GGNGAGKS. 2 coiled-coil regions span residues 311-426 and 547-607; these read EMAR…LQRA and GQQV…WLAA. The segment at 666 to 783 is flexible hinge; that stretch reads PGGSEDARLN…KVPLFGRAAR (118 aa). Coiled coils occupy residues 835–1115 and 1206–1266; these read EAAL…SAKA and DDPV…QAVS. The segment at 850–870 is disordered; it reads RELNNHESENQQQRQQYEQAK.

It belongs to the SMC family. MukB subfamily. In terms of assembly, homodimerization via its hinge domain. Binds to DNA via its C-terminal region. Interacts, and probably forms a ternary complex, with MukE and MukF via its C-terminal region. The complex formation is stimulated by calcium or magnesium. Interacts with tubulin-related protein FtsZ.

The protein resides in the cytoplasm. The protein localises to the nucleoid. Plays a central role in chromosome condensation, segregation and cell cycle progression. Functions as a homodimer, which is essential for chromosome partition. Involved in negative DNA supercoiling in vivo, and by this means organize and compact chromosomes. May achieve or facilitate chromosome segregation by condensation DNA from both sides of a centrally located replisome during cell division. This chain is Chromosome partition protein MukB, found in Erwinia tasmaniensis (strain DSM 17950 / CFBP 7177 / CIP 109463 / NCPPB 4357 / Et1/99).